The primary structure comprises 433 residues: D-amino acid dehydrogenase (433 aa).

Residue 3–17 (VLVLGSGVIGTTSAY) participates in FAD binding.

This sequence belongs to the DadA oxidoreductase family. Requires FAD as cofactor.

The catalysed reaction is a D-alpha-amino acid + A + H2O = a 2-oxocarboxylate + AH2 + NH4(+). It participates in amino-acid degradation; D-alanine degradation; NH(3) and pyruvate from D-alanine: step 1/1. Oxidative deamination of D-amino acids. This Pseudomonas savastanoi pv. phaseolicola (strain 1448A / Race 6) (Pseudomonas syringae pv. phaseolicola (strain 1448A / Race 6)) protein is D-amino acid dehydrogenase.